The sequence spans 378 residues: Cytochrome b (378 aa).

4 helical membrane-spanning segments follow: residues 34–54 (FGSLLGLCLVIQILSGLFLSM), 78–100 (WLLRSIHANGASFFFMCLYCHIG), 113–133 (TWNVGVVIFFLTMGTAFVGYV), and 179–199 (FFSFHFLFPFMIAGLSMVHLL). Positions 84 and 98 each coordinate heme b. Positions 183 and 197 each coordinate heme b. His202 contributes to the a ubiquinone binding site. A run of 4 helical transmembrane segments spans residues 225–245 (YSTKDIAGFLVFFFVFFIVVL), 289–306 (LGGVVSLVASIAILFCLP), 313–342 (KFRSLVFYPLNQILFWSFCSIFLLLTWIGM), and 350–369 (IFIGQILTVLYFSYFLLNPL).

The protein belongs to the cytochrome b family. The main subunits of complex b-c1 are: cytochrome b, cytochrome c1 and the Rieske protein. Heme b serves as cofactor.

The protein localises to the mitochondrion inner membrane. Its function is as follows. Component of the ubiquinol-cytochrome c reductase complex (complex III or cytochrome b-c1 complex) that is part of the mitochondrial respiratory chain. The b-c1 complex mediates electron transfer from ubiquinol to cytochrome c. Contributes to the generation of a proton gradient across the mitochondrial membrane that is then used for ATP synthesis. This is Cytochrome b (mt:Cyt-b) from Loxocorone allax (Goblet worm).